Here is a 154-residue protein sequence, read N- to C-terminus: MGLSDGEWQLVLNVWGKVEADIPSHGQEVLIRLFKGHPETLEKFDKFKHLKSEDEMKASEDLKKHGATVLTALGGILKKKGHHEAEIKPLAQSHATKHKIPVKYLEFISESIIQVLQSKHPGDFGADAQGAMNKALELFRKDMASNYKELGFQG.

One can recognise a Globin domain in the interval 2-148 (GLSDGEWQLV…FRKDMASNYK (147 aa)). Residue serine 4 is modified to Phosphoserine. Histidine 65 is a nitrite binding site. An O2-binding site is contributed by histidine 65. The residue at position 68 (threonine 68) is a Phosphothreonine. Histidine 94 is a heme b binding site.

The protein belongs to the globin family. In terms of assembly, monomeric.

Its subcellular location is the cytoplasm. It is found in the sarcoplasm. It carries out the reaction Fe(III)-heme b-[protein] + nitric oxide + H2O = Fe(II)-heme b-[protein] + nitrite + 2 H(+). It catalyses the reaction H2O2 + AH2 = A + 2 H2O. In terms of biological role, monomeric heme protein which primary function is to store oxygen and facilitate its diffusion within muscle tissues. Reversibly binds oxygen through a pentacoordinated heme iron and enables its timely and efficient release as needed during periods of heightened demand. Depending on the oxidative conditions of tissues and cells, and in addition to its ability to bind oxygen, it also has a nitrite reductase activity whereby it regulates the production of bioactive nitric oxide. Under stress conditions, like hypoxia and anoxia, it also protects cells against reactive oxygen species thanks to its pseudoperoxidase activity. This is Myoglobin (MB) from Pongo pygmaeus (Bornean orangutan).